The sequence spans 142 residues: Large ribosomal subunit protein bL17 (142 aa).

Belongs to the bacterial ribosomal protein bL17 family. Part of the 50S ribosomal subunit. Contacts protein L32.

In Chlamydia caviae (strain ATCC VR-813 / DSM 19441 / 03DC25 / GPIC) (Chlamydophila caviae), this protein is Large ribosomal subunit protein bL17.